We begin with the raw amino-acid sequence, 827 residues long: Disintegrin and metalloproteinase domain-containing protein 17 (827 aa).

The N-terminal stretch at 1-17 (MRQRLLFLTTLVPFVLA) is a signal peptide. Positions 18–214 (PRPPEEPGSG…SEEFVRRVKR (197 aa)) are excised as a propeptide. An N-linked (GlcNAc...) asparagine glycan is attached at Asn-157. A Cysteine switch motif is present at residues 182–189 (KVCGYLNA). Position 184 (Cys-184) interacts with Zn(2+). Topologically, residues 215–671 (RAEPNPLKNT…NTFGKFLADN (457 aa)) are extracellular. A Peptidase M12B domain is found at 223–474 (NTCKLLVVAD…KAQECFQERS (252 aa)). Disulfide bonds link Cys-225-Cys-333, Cys-365-Cys-469, and Cys-423-Cys-453. A glycan (N-linked (GlcNAc...) asparagine) is linked at Asn-264. Residue His-405 coordinates Zn(2+). The active site involves Glu-406. His-409 and His-415 together coordinate Zn(2+). N-linked (GlcNAc...) asparagine glycosylation is found at Asn-452, Asn-498, Asn-539, and Asn-551. Residues 475-563 (NKVCGNSRVD…ECPPPGDAED (89 aa)) enclose the Disintegrin domain. Cystine bridges form between Cys-534/Cys-555, Cys-573/Cys-582, Cys-578/Cys-591, and Cys-593/Cys-600. The crambin-like stretch occupies residues 603–671 (CCRNLSGPCV…NTFGKFLADN (69 aa)). An N-linked (GlcNAc...) asparagine glycan is attached at Asn-606. A helical membrane pass occupies residues 672–692 (IVGSVLVFSLIFWIPFSILVH). The Cytoplasmic segment spans residues 693 to 827 (CVDKKLDKQY…SRVDSKETEC (135 aa)). Positions 731–738 (PAPQTPGR) match the SH3-binding motif. At Thr-735 the chain carries Phosphothreonine; by MAPK14. Phosphothreonine is present on Thr-764. The segment at 766 to 827 (QEDPSTDSHV…SRVDSKETEC (62 aa)) is disordered. Position 770 is a phosphoserine (Ser-770). 3 stretches are compositionally biased toward basic and acidic residues: residues 771-784 (TDSH…EKDP), 794-810 (SFED…EKAA), and 818-827 (SRVDSKETEC). 2 positions are modified to phosphoserine: Ser-794 and Ser-822.

As to quaternary structure, interacts with MAD2L1, MAPK14 and MUC1. Interacts with iRhom1/RHBDF1 and iRhom2/RHBDF2. Interacts with FRMD8 via its interaction with iRhom1/RHBDF1 and iRhom2/RHBDF2. Interacts with TSPAN8. The cofactor is Zn(2+). The precursor is cleaved by a furin endopeptidase. Post-translationally, phosphorylated. Stimulation by growth factor or phorbol 12-myristate 13-acetate induces phosphorylation of Ser-822 but decreases phosphorylation of Ser-794. Phosphorylation at Thr-735 by MAPK14 is required for ADAM17-mediated ectodomain shedding.

The protein resides in the membrane. The catalysed reaction is Narrow endopeptidase specificity. Cleaves Pro-Leu-Ala-Gln-Ala-|-Val-Arg-Ser-Ser-Ser in the membrane-bound, 26-kDa form of tumor necrosis factor alpha (TNFalpha). Similarly cleaves other membrane-anchored, cell-surface proteins to 'shed' the extracellular domains.. Transmembrane metalloprotease which mediates the ectodomain shedding of a myriad of transmembrane proteins including adhesion proteins, growth factor precursors and cytokines important for inflammation and immunity. Cleaves the membrane-bound precursor of TNF-alpha to its mature soluble form. Responsible for the proteolytical release of soluble JAM3 from endothelial cells surface. Responsible for the proteolytic release of several other cell-surface proteins, including p75 TNF-receptor, interleukin 1 receptor type II, p55 TNF-receptor, transforming growth factor-alpha, L-selectin, growth hormone receptor, MUC1 and the amyloid precursor protein. Acts as an activator of Notch pathway by mediating cleavage of Notch, generating the membrane-associated intermediate fragment called Notch extracellular truncation (NEXT). Plays a role in the proteolytic processing of ACE2. Plays a role in hemostasis through shedding of GP1BA, the platelet glycoprotein Ib alpha chain. Mediates the proteolytic cleavage of LAG3, leading to release the secreted form of LAG3. Mediates the proteolytic cleavage of IL6R, leading to the release of secreted form of IL6R. Mediates the proteolytic cleavage and shedding of FCGR3A upon NK cell stimulation, a mechanism that allows for increased NK cell motility and detachment from opsonized target cells. Cleaves TREM2, resulting in shedding of the TREM2 ectodomain. In Rattus norvegicus (Rat), this protein is Disintegrin and metalloproteinase domain-containing protein 17 (Adam17).